Here is a 490-residue protein sequence, read N- to C-terminus: O-acetyltransferase PaAT-2 (490 aa).

The active-site Proton acceptor is the histidine 165.

This sequence belongs to the plant acyltransferase family.

It functions in the pathway mycotoxin biosynthesis. O-acetyltransferase; part of the 2 gene clusters that mediate the biosynthesis of fusicoccins, diterpene glucosides that display phytohormone-like activity and function as potent activators of plasma membrane H(+)-ATPases in plants by modifying 14-3-3 proteins and cause the plant disease constriction canker. The first step in the pathway is performed by the fusicoccadiene synthase PaFS that possesses both prenyl transferase and terpene cyclase activity, converting isopentenyl diphosphate and dimethylallyl diphosphate into geranylgeranyl diphosphate (GGDP) and successively converting GGDP into fusicocca-2,10(14)-diene, a precursor for fusicoccin H. The second step is the oxidation at the C-8 position by the cytochrome P450 monooxygenase PaP450-2 to yield fusicocca-2,10(14)-diene-8-beta-ol. The cytochrome P450 monooxygenase PaP450-1 then catalyzes the hydroxylation at the C-16 position to produce fusicocca-2,10(14)-diene-8-beta,16-diol. The dioxygenase fc-dox then catalyzes the 16-oxydation of fusicocca-2,10(14)-diene-8-beta,16-diol to yield an aldehyde (8-beta-hydroxyfusicocca-1,10(14)-dien-16-al). The short-chain dehydrogenase/reductase fc-sdr catalyzes the reduction of the aldehyde to yield fusicocca-1,10(14)-diene-8-beta,16-diol. The next step is the hydroxylation at C-9 performed by the cytochrome P450 monooxygenase PaP450-3 that leads to fusicoccin H aglycon which is glycosylated to fusicoccin H by the O-glycosyltransferase PaGT. Hydroxylation at C-12 by the cytochrome P450 monooxygenase PaP450-4 leads then to the production of fusicoccin Q and is followed by methylation by the O-methyltransferase PaMT to yield fusicoccin P. Fusicoccin P is further converted to fusicoccin J via prenylation by the O-glucose prenyltransferase PaPT. Cytochrome P450 monooxygenase PaP450-5 then performs hydroxylation at C-19 to yield dideacetyl-fusicoccin A which is acetylated to 3'-O-deacetyl-fusicoccin A by the O-acetyltransferase PaAT-2. Finally, a another acetylation by the O-acetyltransferase PaAT-1 yields fusicoccin A. This Phomopsis amygdali (Fusicoccum amygdali) protein is O-acetyltransferase PaAT-2.